A 370-amino-acid polypeptide reads, in one-letter code: MNVAAKYRMASLYVGDLHADVTEDLLFRKFSTVGPVLSIRICRDQVTRRSLGYAYVNFLQLADAQKALDTMNFDIIKGKSIRLMWSQRDAYLRRSGIGNVFIKNLDKSIDNKTLYEHFSAFGKILSSKVMSDDQGSKGYAFVHFQNQSAADRAIEEMNGKLLKGCKVFVGRFKNRKDREAELRSKASEFTNVYIKNFGGDMDDERLKDVFSKYGKTLSVKVMTDSSGKSKGFGFVSFDSHEAAKKAVEEMNGRDINGQLIFVGRAQKKVERQAELKQMFEQLKRERIRGCQGVKLYIKNLDDTIDDEKLRNEFSSFGSISRVKVMQEEGQSKGFGLICFSSPEDATKAMTEMNGRILGSKPLSIALAQRH.

4 consecutive RRM domains span residues 10-88 (ASLY…WSQR), 98-174 (GNVF…RFKN), 190-267 (TNVY…RAQK), and 293-369 (VKLY…LAQR).

This sequence belongs to the polyadenylate-binding protein type-1 family.

Functionally, may bind RNA. This Homo sapiens (Human) protein is Polyadenylate-binding protein 4-like (PABPC4L).